A 137-amino-acid chain; its full sequence is Small ribosomal subunit protein uS12 (137 aa).

2 disordered regions span residues 1–22 (MPTINQLVRKPRKSKVSKSKSP) and 35–57 (ATNNAAPQKRGVATRVGTMTPKK). The segment covering 9-18 (RKPRKSKVSK) has biased composition (basic residues). Residue aspartate 102 is modified to 3-methylthioaspartic acid.

This sequence belongs to the universal ribosomal protein uS12 family. Part of the 30S ribosomal subunit. Contacts proteins S8 and S17. May interact with IF1 in the 30S initiation complex.

Functionally, with S4 and S5 plays an important role in translational accuracy. In terms of biological role, interacts with and stabilizes bases of the 16S rRNA that are involved in tRNA selection in the A site and with the mRNA backbone. Located at the interface of the 30S and 50S subunits, it traverses the body of the 30S subunit contacting proteins on the other side and probably holding the rRNA structure together. The combined cluster of proteins S8, S12 and S17 appears to hold together the shoulder and platform of the 30S subunit. This chain is Small ribosomal subunit protein uS12, found in Leuconostoc mesenteroides subsp. mesenteroides (strain ATCC 8293 / DSM 20343 / BCRC 11652 / CCM 1803 / JCM 6124 / NCDO 523 / NBRC 100496 / NCIMB 8023 / NCTC 12954 / NRRL B-1118 / 37Y).